The primary structure comprises 104 residues: Large ribosomal subunit protein uL24 (104 aa).

Belongs to the universal ribosomal protein uL24 family. In terms of assembly, part of the 50S ribosomal subunit.

Its function is as follows. One of two assembly initiator proteins, it binds directly to the 5'-end of the 23S rRNA, where it nucleates assembly of the 50S subunit. One of the proteins that surrounds the polypeptide exit tunnel on the outside of the subunit. The protein is Large ribosomal subunit protein uL24 of Corynebacterium kroppenstedtii (strain DSM 44385 / JCM 11950 / CIP 105744 / CCUG 35717).